A 77-amino-acid polypeptide reads, in one-letter code: Envelope glycoprotein (77 aa).

The Extracellular portion of the chain corresponds to Leu-1–Leu-24. The chain crosses the membrane as a helical span at residues Ser-25–Ile-45. Cys-43 carries the S-palmitoyl cysteine; by host lipid modification. Topologically, residues Asn-46–Leu-77 are cytoplasmic. The short motif at Tyr-68 to Leu-71 is the YXXL motif; contains endocytosis signal element.

As to quaternary structure, the mature envelope protein (Env) consists of a trimer of SU-TM heterodimers attached by noncovalent interactions or by a labile interchain disulfide bond. In terms of processing, specific enzymatic cleavages in vivo yield mature proteins. Envelope glycoproteins are synthesized as an inactive precursor that is N-glycosylated and processed likely by host cell furin or by a furin-like protease in the Golgi to yield the mature SU and TM proteins. The cleavage site between SU and TM requires the minimal sequence [KR]-X-[KR]-R. The R-peptide is released from the C-terminus of the cytoplasmic tail of the TM protein upon particle formation as a result of proteolytic cleavage by the viral protease. Cleavage of this peptide is required for TM to become fusogenic. The transmembrane protein is palmitoylated. Post-translationally, the R-peptide is palmitoylated.

It localises to the virion membrane. The protein localises to the host cell membrane. Its function is as follows. The surface protein (SU) attaches the virus to the host cell by binding to its receptor. This interaction triggers the refolding of the transmembrane protein (TM) and is thought to activate its fusogenic potential by unmasking its fusion peptide. Fusion occurs at the host cell plasma membrane. Functionally, the transmembrane protein (TM) acts as a class I viral fusion protein. Under the current model, the protein has at least 3 conformational states: pre-fusion native state, pre-hairpin intermediate state, and post-fusion hairpin state. During viral and target cell membrane fusion, the coiled coil regions (heptad repeats) assume a trimer-of-hairpins structure, positioning the fusion peptide in close proximity to the C-terminal region of the ectodomain. The formation of this structure appears to drive apposition and subsequent fusion of viral and target cell membranes. Membranes fusion leads to delivery of the nucleocapsid into the cytoplasm. The chain is Envelope glycoprotein (env) from Woolly monkey sarcoma virus (WMSV).